A 77-amino-acid polypeptide reads, in one-letter code: Conotoxin Ar5.1 a (77 aa).

The N-terminal stretch at Met1–Ser19 is a signal peptide. Positions Asn20–Lys44 are excised as a propeptide.

It belongs to the conotoxin T superfamily. Post-translationally, contains 2 disulfide bonds that can be either 'C1-C3, C2-C4' or 'C1-C4, C2-C3', since these disulfide connectivities have been observed for conotoxins with cysteine framework V (for examples, see AC P0DQQ7 and AC P81755). In terms of tissue distribution, expressed by the venom duct.

The protein resides in the secreted. In Conus arenatus (Sand-dusted cone), this protein is Conotoxin Ar5.1 a.